Here is a 29-residue protein sequence, read N- to C-terminus: Trypsin inhibitor 3 (29 aa).

Cystine bridges form between cysteine 3/cysteine 20, cysteine 10/cysteine 22, and cysteine 16/cysteine 28.

This sequence belongs to the protease inhibitor I7 (squash-type serine protease inhibitor) family.

It is found in the secreted. In terms of biological role, strongly inhibits trypsin, weakly inhibits chymotrypsin. The chain is Trypsin inhibitor 3 from Cyclanthera pedata (Achocha).